Reading from the N-terminus, the 522-residue chain is Maturase K (522 aa).

It belongs to the intron maturase 2 family. MatK subfamily.

The protein resides in the plastid. It localises to the chloroplast. In terms of biological role, usually encoded in the trnK tRNA gene intron. Probably assists in splicing its own and other chloroplast group II introns. This chain is Maturase K, found in Aristea glauca.